Reading from the N-terminus, the 568-residue chain is MNTTYDYIIVGAGSAGCVLADRLSASGEHYILLLEAGGSDRSIFIQMPTALSYPMNSEKYAWQFETQPEAGLDSRSLHCPRGRVLGGSSSINGMVYVRGHACDYDEWVEQGAEGWSYQECLPYFRRAESWIHGEDTYRGGDGPVGTCNGNDMELNPLYQAFIDAGQQAGYPKTDDYNGYQQEGFGPMHMTVDKGIRASTSNAYLRRAMKRSNLTVRKGVVTRKVLIKNKQAIGVEIEVGGKVQSVYANTEVLLSAGSVGSPQLLQLSGIGPKAVLEQAGIAVKHDLPGVGENLQDHLEVYFQYACHQPITLNSKLGLISKGLIGTRWILQKDGLGATNHFESCAFIRSRAGLKWPNIQYHFLPAAMRYDGQAAFDGHGFQVHVGPNKPQSRGRIWITSADPHQKPNIEFNYISTEQDKQDWRDCIRLTREILAQPAMDDYRGEEIQPGADITSDEAMDAWVRQNVESAYHPSCTCKMGSDNDPMTVLNKDCQVRGIDSLRVIDSSVFPTIPNGNLNAPTIMVAEKAADAILGNTPLSPSNAPTWIAPQWETEQRNGAAQRPMFHQQRK.

6 to 35 (DYIIVGAGSAGCVLADRLSASGEHYILLLE) is an FAD binding site. Residue H470 is the Proton acceptor of the active site.

This sequence belongs to the GMC oxidoreductase family. Requires FAD as cofactor.

It catalyses the reaction choline + A = betaine aldehyde + AH2. The enzyme catalyses betaine aldehyde + NAD(+) + H2O = glycine betaine + NADH + 2 H(+). Its pathway is amine and polyamine biosynthesis; betaine biosynthesis via choline pathway; betaine aldehyde from choline (cytochrome c reductase route): step 1/1. In terms of biological role, involved in the biosynthesis of the osmoprotectant glycine betaine. Catalyzes the oxidation of choline to betaine aldehyde and betaine aldehyde to glycine betaine at the same rate. The sequence is that of Oxygen-dependent choline dehydrogenase from Photobacterium profundum (strain SS9).